The primary structure comprises 273 residues: Thiazole synthase (273 aa).

K113 (schiff-base intermediate with DXP) is an active-site residue. Residues G174, 201 to 202 (AG), and 223 to 224 (NT) each bind 1-deoxy-D-xylulose 5-phosphate.

The protein belongs to the ThiG family. In terms of assembly, homotetramer. Forms heterodimers with either ThiH or ThiS.

It localises to the cytoplasm. The catalysed reaction is [ThiS sulfur-carrier protein]-C-terminal-Gly-aminoethanethioate + 2-iminoacetate + 1-deoxy-D-xylulose 5-phosphate = [ThiS sulfur-carrier protein]-C-terminal Gly-Gly + 2-[(2R,5Z)-2-carboxy-4-methylthiazol-5(2H)-ylidene]ethyl phosphate + 2 H2O + H(+). It functions in the pathway cofactor biosynthesis; thiamine diphosphate biosynthesis. Its function is as follows. Catalyzes the rearrangement of 1-deoxy-D-xylulose 5-phosphate (DXP) to produce the thiazole phosphate moiety of thiamine. Sulfur is provided by the thiocarboxylate moiety of the carrier protein ThiS. In vitro, sulfur can be provided by H(2)S. The protein is Thiazole synthase of Salinibacter ruber (strain DSM 13855 / M31).